Consider the following 89-residue polypeptide: Large ribosomal subunit protein bL28 (89 aa).

Belongs to the bacterial ribosomal protein bL28 family.

This chain is Large ribosomal subunit protein bL28, found in Chlamydia felis (strain Fe/C-56) (Chlamydophila felis).